The following is a 115-amino-acid chain: Large ribosomal subunit protein bL19 (115 aa).

This sequence belongs to the bacterial ribosomal protein bL19 family.

Functionally, this protein is located at the 30S-50S ribosomal subunit interface and may play a role in the structure and function of the aminoacyl-tRNA binding site. The sequence is that of Large ribosomal subunit protein bL19 from Streptococcus gordonii (strain Challis / ATCC 35105 / BCRC 15272 / CH1 / DL1 / V288).